Here is a 231-residue protein sequence, read N- to C-terminus: 7-cyano-7-deazaguanine synthase (231 aa).

Residue 8–18 (FSGGQDSTTCL) coordinates ATP. Zn(2+) is bound by residues C188, C197, C200, and C203.

The protein belongs to the QueC family. Zn(2+) is required as a cofactor.

The catalysed reaction is 7-carboxy-7-deazaguanine + NH4(+) + ATP = 7-cyano-7-deazaguanine + ADP + phosphate + H2O + H(+). The protein operates within purine metabolism; 7-cyano-7-deazaguanine biosynthesis. Functionally, catalyzes the ATP-dependent conversion of 7-carboxy-7-deazaguanine (CDG) to 7-cyano-7-deazaguanine (preQ(0)). The polypeptide is 7-cyano-7-deazaguanine synthase (Salmonella choleraesuis (strain SC-B67)).